The primary structure comprises 399 residues: Elongation factor Tu (399 aa).

Positions lysine 10–threonine 209 constitute a tr-type G domain. A G1 region spans residues glycine 19–threonine 26. Position 19 to 26 (glycine 19 to threonine 26) interacts with GTP. Threonine 26 contacts Mg(2+). The segment at glycine 60–alanine 64 is G2. Positions aspartate 81–glycine 84 are G3. GTP contacts are provided by residues aspartate 81–histidine 85 and asparagine 136–aspartate 139. Residues asparagine 136–aspartate 139 are G4. The G5 stretch occupies residues serine 174–leucine 176.

Belongs to the TRAFAC class translation factor GTPase superfamily. Classic translation factor GTPase family. EF-Tu/EF-1A subfamily. Monomer.

It is found in the cytoplasm. The catalysed reaction is GTP + H2O = GDP + phosphate + H(+). In terms of biological role, GTP hydrolase that promotes the GTP-dependent binding of aminoacyl-tRNA to the A-site of ribosomes during protein biosynthesis. In Campylobacter jejuni (strain RM1221), this protein is Elongation factor Tu.